The primary structure comprises 1348 residues: Kinesin-like protein KIF7 (1348 aa).

The region spanning 15–349 (PVRVALRVRP…LNYASRAQNI (335 aa)) is the Kinesin motor domain. ATP is bound at residue 94 to 101 (GQTGSGKT). The interaction with DLG5 stretch occupies residues 358-479 (HPEAERVPEE…EDQAAQGTSG (122 aa)). An interaction with SMO region spans residues 358–1211 (HPEAERVPEE…LGRHMWINQE (854 aa)). 2 disordered regions span residues 451–486 (RSTL…DEGT) and 607–674 (AQAD…VCPE). Residues 480–542 (RKGDEGTQQL…ELRLRLELAQ (63 aa)) adopt a coiled-coil conformation. The segment covering 620–636 (SEEEGEEEEEEEEEEEE) has biased composition (acidic residues). Coiled coils occupy residues 698-1057 (APAA…IEAL) and 1109-1211 (FDKV…INQE). The residue at position 903 (Ser-903) is a Phosphoserine. Disordered stretches follow at residues 1288-1314 (LCSE…VLPM) and 1328-1348 (KPRW…KNPL).

This sequence belongs to the TRAFAC class myosin-kinesin ATPase superfamily. Kinesin family. As to quaternary structure, can form homodimers and interacts with microtubules. Interacts with GLI1 and SMO. Interacts with GLI2, GLI3 and SUFU. Interacts with NPHP1. Interacts with SMO and DLG5 (via PDZ4 or guanylate kinase-like domain). Polyubiquitinated by UBR3. In terms of tissue distribution, expressed in heart, lung, liver, kidney, testis, spleen and cerebellum.

It is found in the cell projection. It localises to the cilium. The protein localises to the cytoplasm. Its subcellular location is the cytoskeleton. The protein resides in the cilium basal body. In terms of biological role, essential for hedgehog signaling regulation: acts both as a negative and a positive regulator of sonic hedgehog (Shh) and Indian hedgehog (Ihh) pathways, acting downstream of SMO, through both SUFU-dependent and -independent mechanisms. Involved in the regulation of microtubular dynamics. Required for proper organization of the ciliary tip and control of ciliary localization of SUFU-GLI2 complexes. Required for localization of GLI3 to cilia in response to Shh. Negatively regulates Shh signaling by preventing inappropriate activation of the transcriptional activator GLI2 in the absence of ligand. Positively regulates Shh signaling by preventing the processing of the transcription factor GLI3 into its repressor form. In keratinocytes, promotes the dissociation of SUFU-GLI2 complexes, GLI2 nuclear translocation and Shh signaling activation. Involved in the regulation of epidermal differentiation and chondrocyte development. This chain is Kinesin-like protein KIF7 (Kif7), found in Mus musculus (Mouse).